A 361-amino-acid polypeptide reads, in one-letter code: 3-dehydroquinate synthase (361 aa).

Residues 72–77 (SGEKEK), 130–131 (TT), Lys142, and Lys151 contribute to the NAD(+) site. Zn(2+)-binding residues include Glu184, His247, and His264.

This sequence belongs to the sugar phosphate cyclases superfamily. Dehydroquinate synthase family. Co(2+) serves as cofactor. The cofactor is Zn(2+). It depends on NAD(+) as a cofactor.

The protein resides in the cytoplasm. It catalyses the reaction 7-phospho-2-dehydro-3-deoxy-D-arabino-heptonate = 3-dehydroquinate + phosphate. It participates in metabolic intermediate biosynthesis; chorismate biosynthesis; chorismate from D-erythrose 4-phosphate and phosphoenolpyruvate: step 2/7. Its function is as follows. Catalyzes the conversion of 3-deoxy-D-arabino-heptulosonate 7-phosphate (DAHP) to dehydroquinate (DHQ). This chain is 3-dehydroquinate synthase, found in Bacillus cereus (strain ZK / E33L).